The following is a 155-amino-acid chain: Protein-export protein SecB (155 aa).

The protein belongs to the SecB family. As to quaternary structure, homotetramer, a dimer of dimers. One homotetramer interacts with 1 SecA dimer.

The protein localises to the cytoplasm. Its function is as follows. One of the proteins required for the normal export of preproteins out of the cell cytoplasm. It is a molecular chaperone that binds to a subset of precursor proteins, maintaining them in a translocation-competent state. It also specifically binds to its receptor SecA. This Enterobacter sp. (strain 638) protein is Protein-export protein SecB.